The chain runs to 267 residues: Multivesicular body subunit 12A (267 aa).

In terms of domain architecture, MABP spans 7 to 146 (AAPLSGVGWA…SFAIWCKKGA (140 aa)). The short motif at 154–159 (PVPKPR) is the SH3-binding element. Residues 210–259 (MDGVPFTLHPKFERSPKSDSSAILTDLTVKSLADIEKEYNYTFVVERTAA) enclose the UMA domain.

It belongs to the MVB12 family. Component of the ESCRT-I complex (endosomal sorting complex required for transport I).

The protein resides in the cytoplasm. It is found in the endosome. Its subcellular location is the late endosome membrane. Its function is as follows. Component of the ESCRT-I complex, a regulator of vesicular trafficking process. Required for the sorting of endocytic ubiquitinated cargos into multivesicular bodies. In Gallus gallus (Chicken), this protein is Multivesicular body subunit 12A (MVB12A).